Here is a 550-residue protein sequence, read N- to C-terminus: Chaperonin GroEL (550 aa).

ATP is bound by residues 30 to 33, K51, 87 to 91, G415, 479 to 481, and D495; these read TLGP, DGTTT, and NAA.

It belongs to the chaperonin (HSP60) family. Forms a cylinder of 14 subunits composed of two heptameric rings stacked back-to-back. Interacts with the co-chaperonin GroES.

It localises to the cytoplasm. It catalyses the reaction ATP + H2O + a folded polypeptide = ADP + phosphate + an unfolded polypeptide.. Functionally, together with its co-chaperonin GroES, plays an essential role in assisting protein folding. The GroEL-GroES system forms a nano-cage that allows encapsulation of the non-native substrate proteins and provides a physical environment optimized to promote and accelerate protein folding. In Burkholderia mallei (strain NCTC 10247), this protein is Chaperonin GroEL.